The following is an 865-amino-acid chain: DNA-directed RNA polymerase subunit Rpo1N (865 aa).

Residues cysteine 60, cysteine 63, cysteine 70, histidine 73, cysteine 100, cysteine 103, cysteine 146, and cysteine 149 each contribute to the Zn(2+) site. Positions 451, 453, and 455 each coordinate Mg(2+). Positions 500-531 are disordered; the sequence is EHTSSQGKRLFSVRSRPPDPQEGRAPPPDREG. The span at 515–531 shows a compositional bias: basic and acidic residues; the sequence is RPPDPQEGRAPPPDREG.

Belongs to the RNA polymerase beta' chain family. As to quaternary structure, part of the RNA polymerase complex. Mg(2+) is required as a cofactor. The cofactor is Zn(2+).

It localises to the cytoplasm. It carries out the reaction RNA(n) + a ribonucleoside 5'-triphosphate = RNA(n+1) + diphosphate. In terms of biological role, DNA-dependent RNA polymerase (RNAP) catalyzes the transcription of DNA into RNA using the four ribonucleoside triphosphates as substrates. Forms the clamp head domain. The chain is DNA-directed RNA polymerase subunit Rpo1N from Methanothermobacter thermautotrophicus (strain Winter) (Methanobacterium thermoautotrophicum).